The primary structure comprises 227 residues: Cytochrome c oxidase subunit 2 (227 aa).

The Mitochondrial intermembrane segment spans residues 1–14; sequence MAYPMQLGLQDATS. A helical membrane pass occupies residues 15-45; that stretch reads PIMEELLHFHDHTLMIVFLISSLVLYIISLM. Residues 46–59 are Mitochondrial matrix-facing; that stretch reads LTTKLTHTSTMDAQ. The chain crosses the membrane as a helical span at residues 60-87; sequence EVETIWTILPAIILIMIALPSLRILYMM. Residues 88 to 227 lie on the Mitochondrial intermembrane side of the membrane; the sequence is DEINNPSLTV…HFEKWSASML (140 aa). Residues H161, C196, E198, C200, H204, and M207 each coordinate Cu cation. E198 lines the Mg(2+) pocket.

It belongs to the cytochrome c oxidase subunit 2 family. In terms of assembly, component of the cytochrome c oxidase (complex IV, CIV), a multisubunit enzyme composed of 14 subunits. The complex is composed of a catalytic core of 3 subunits MT-CO1, MT-CO2 and MT-CO3, encoded in the mitochondrial DNA, and 11 supernumerary subunits COX4I, COX5A, COX5B, COX6A, COX6B, COX6C, COX7A, COX7B, COX7C, COX8 and NDUFA4, which are encoded in the nuclear genome. The complex exists as a monomer or a dimer and forms supercomplexes (SCs) in the inner mitochondrial membrane with NADH-ubiquinone oxidoreductase (complex I, CI) and ubiquinol-cytochrome c oxidoreductase (cytochrome b-c1 complex, complex III, CIII), resulting in different assemblies (supercomplex SCI(1)III(2)IV(1) and megacomplex MCI(2)III(2)IV(2)). Found in a complex with TMEM177, COA6, COX18, COX20, SCO1 and SCO2. Interacts with TMEM177 in a COX20-dependent manner. Interacts with COX20. Interacts with COX16. It depends on Cu cation as a cofactor.

The protein resides in the mitochondrion inner membrane. The enzyme catalyses 4 Fe(II)-[cytochrome c] + O2 + 8 H(+)(in) = 4 Fe(III)-[cytochrome c] + 2 H2O + 4 H(+)(out). Its function is as follows. Component of the cytochrome c oxidase, the last enzyme in the mitochondrial electron transport chain which drives oxidative phosphorylation. The respiratory chain contains 3 multisubunit complexes succinate dehydrogenase (complex II, CII), ubiquinol-cytochrome c oxidoreductase (cytochrome b-c1 complex, complex III, CIII) and cytochrome c oxidase (complex IV, CIV), that cooperate to transfer electrons derived from NADH and succinate to molecular oxygen, creating an electrochemical gradient over the inner membrane that drives transmembrane transport and the ATP synthase. Cytochrome c oxidase is the component of the respiratory chain that catalyzes the reduction of oxygen to water. Electrons originating from reduced cytochrome c in the intermembrane space (IMS) are transferred via the dinuclear copper A center (CU(A)) of subunit 2 and heme A of subunit 1 to the active site in subunit 1, a binuclear center (BNC) formed by heme A3 and copper B (CU(B)). The BNC reduces molecular oxygen to 2 water molecules using 4 electrons from cytochrome c in the IMS and 4 protons from the mitochondrial matrix. The protein is Cytochrome c oxidase subunit 2 (MT-CO2) of Damaliscus pygargus phillipsi (Blesbok).